A 573-amino-acid polypeptide reads, in one-letter code: DNA damage-binding protein CMR1 (573 aa).

Positions 27–94 (DSLNDSISRE…EMEKAEERKR (68 aa)) are disordered. Residues 72-152 (TMEDSEEDKQ…EEIKKEEDST (81 aa)) are a coiled coil. The span at 79-94 (DKQMREEMEKAEERKR) shows a compositional bias: basic and acidic residues. WD repeat units follow at residues 218–259 (ITQQ…DDET), 268–308 (PHGK…STEV), 319–357 (DYPL…KQGE), 361–401 (LHDK…QKNS), 418–456 (HSRL…KLPL), 495–538 (GRWV…LCHL), and 542–573 (DRMT…YLFE).

It belongs to the WD repeat DDB2/WDR76 family.

Its function is as follows. DNA-binding protein that binds to both single- and double-stranded DNA. Binds preferentially to UV-damaged DNA. May be involved in DNA-metabolic processes. The chain is DNA damage-binding protein CMR1 from Meyerozyma guilliermondii (strain ATCC 6260 / CBS 566 / DSM 6381 / JCM 1539 / NBRC 10279 / NRRL Y-324) (Yeast).